A 316-amino-acid chain; its full sequence is Homoserine kinase (316 aa).

Proline 97–serine 107 contacts ATP.

This sequence belongs to the GHMP kinase family. Homoserine kinase subfamily.

Its subcellular location is the cytoplasm. It carries out the reaction L-homoserine + ATP = O-phospho-L-homoserine + ADP + H(+). Its pathway is amino-acid biosynthesis; L-threonine biosynthesis; L-threonine from L-aspartate: step 4/5. Catalyzes the ATP-dependent phosphorylation of L-homoserine to L-homoserine phosphate. This Prochlorococcus marinus (strain MIT 9313) protein is Homoserine kinase.